Reading from the N-terminus, the 90-residue chain is DNA-directed RNA polymerase subunit Rpo11 (90 aa).

It belongs to the archaeal Rpo11/eukaryotic RPB11/RPC19 RNA polymerase subunit family. As to quaternary structure, part of the RNA polymerase complex.

Its subcellular location is the cytoplasm. It carries out the reaction RNA(n) + a ribonucleoside 5'-triphosphate = RNA(n+1) + diphosphate. Functionally, DNA-dependent RNA polymerase (RNAP) catalyzes the transcription of DNA into RNA using the four ribonucleoside triphosphates as substrates. The polypeptide is DNA-directed RNA polymerase subunit Rpo11 (Metallosphaera sedula (strain ATCC 51363 / DSM 5348 / JCM 9185 / NBRC 15509 / TH2)).